Here is a 366-residue protein sequence, read N- to C-terminus: Bacteriochlorophyll a protein (366 aa).

Residues His-110, His-145, His-290, His-297, and His-298 each coordinate bacteriochlorophyll a.

As to quaternary structure, homotrimer. Each subunit contains 7 molecules of bacteriochlorophyll a.

In terms of biological role, intermediary in the transfer of excitation energy from the chlorophyll to the reaction centers. In Prosthecochloris aestuarii, this protein is Bacteriochlorophyll a protein.